The primary structure comprises 503 residues: WD repeat-containing protein 55 homolog (503 aa).

Residues 1 to 131 are disordered; that stretch reads MHTHNNFKTP…DSAAFDLDDL (131 aa). Composition is skewed to acidic residues over residues 12–23 and 37–56; these read DADELDDLDDDM and VGED…DMEA. The segment covering 59 to 76 has biased composition (polar residues); it reads PNQNADENESISSDSSFD. Over residues 78-96 the composition is skewed to acidic residues; it reads NAEDSSDSDDSMLEEDEAE. 6 WD repeats span residues 157–196, 201–242, 244–282, 285–324, 327–366, and 411–450; these read KLED…NKLL, VHSK…KLYE, AHDD…PIFE, EVED…LYVQ, PYEE…YHCD, and QHNM…DFGD. The interval 483-503 is disordered; sequence TKEDEDNADNNDAAAGPSNSA.

It belongs to the WD repeat WDR55 family.

The sequence is that of WD repeat-containing protein 55 homolog from Drosophila pseudoobscura pseudoobscura (Fruit fly).